We begin with the raw amino-acid sequence, 393 residues long: Flavohemoprotein (393 aa).

Positions 1 to 139 constitute a Globin domain; sequence MLSNAQRALI…LADLLIEAEE (139 aa). Residue histidine 85 coordinates heme b. Residues tyrosine 95 and glutamate 138 each act as charge relay system in the active site. Positions 150 to 393 are reductase; that stretch reads GGWRGVRRFR…FFGPAAALDA (244 aa). The FAD-binding FR-type domain occupies 153–256; that stretch reads RGVRRFRVAR…FPPAGDFVLR (104 aa). FAD contacts are provided by residues tyrosine 191 and 205–208; that span reads RNYS. NADP(+) is bound at residue 268-273; that stretch reads GVGITP. Residue 384-387 participates in FAD binding; it reads FFGP.

It belongs to the globin family. Two-domain flavohemoproteins subfamily. In the C-terminal section; belongs to the flavoprotein pyridine nucleotide cytochrome reductase family. The cofactor is heme b. It depends on FAD as a cofactor.

It catalyses the reaction 2 nitric oxide + NADPH + 2 O2 = 2 nitrate + NADP(+) + H(+). The enzyme catalyses 2 nitric oxide + NADH + 2 O2 = 2 nitrate + NAD(+) + H(+). Its function is as follows. Is involved in NO detoxification in an aerobic process, termed nitric oxide dioxygenase (NOD) reaction that utilizes O(2) and NAD(P)H to convert NO to nitrate, which protects the bacterium from various noxious nitrogen compounds. Therefore, plays a central role in the inducible response to nitrosative stress. The polypeptide is Flavohemoprotein (Pseudomonas aeruginosa (strain ATCC 15692 / DSM 22644 / CIP 104116 / JCM 14847 / LMG 12228 / 1C / PRS 101 / PAO1)).